Consider the following 325-residue polypeptide: uncharacterized protein (325 aa).

Residues 49 to 151 (RYEHSIGVML…ELCADRTDYT (103 aa)) enclose the HD domain.

This is an uncharacterized protein from Bacillus subtilis (strain 168).